Consider the following 383-residue polypeptide: 8-amino-7-oxononanoate synthase (383 aa).

Arg-20 provides a ligand contact to substrate. Residue Gly-107–Tyr-108 participates in pyridoxal 5'-phosphate binding. A substrate-binding site is contributed by His-132. Residues Ser-178, His-206, and Thr-233 each coordinate pyridoxal 5'-phosphate. Lys-236 is modified (N6-(pyridoxal phosphate)lysine). Substrate is bound at residue Thr-349.

Belongs to the class-II pyridoxal-phosphate-dependent aminotransferase family. BioF subfamily. Homodimer. It depends on pyridoxal 5'-phosphate as a cofactor.

It carries out the reaction 6-carboxyhexanoyl-[ACP] + L-alanine + H(+) = (8S)-8-amino-7-oxononanoate + holo-[ACP] + CO2. It functions in the pathway cofactor biosynthesis; biotin biosynthesis. Functionally, catalyzes the decarboxylative condensation of pimeloyl-[acyl-carrier protein] and L-alanine to produce 8-amino-7-oxononanoate (AON), [acyl-carrier protein], and carbon dioxide. In Chromobacterium violaceum (strain ATCC 12472 / DSM 30191 / JCM 1249 / CCUG 213 / NBRC 12614 / NCIMB 9131 / NCTC 9757 / MK), this protein is 8-amino-7-oxononanoate synthase.